We begin with the raw amino-acid sequence, 1295 residues long: Nonribosomal peptide synthetase resC (1295 aa).

The tract at residues 1–24 (MDLTTTSHARVDSGGVPFTSSLND) is disordered. The adenylation stretch occupies residues 221–624 (KDVVDASPQA…EGRKDTQIKL (404 aa)). The 78-residue stretch at 759 to 836 (ESANPAEENL…DQANLLRPLV (78 aa)) folds into the Carrier domain. Ser-796 carries the O-(pantetheine 4'-phosphoryl)serine modification. Residues 873–1284 (EDVYPCTPYQ…DEYSQTLHEL (412 aa)) are condensation.

Belongs to the NRP synthetase family. Requires pantetheine 4'-phosphate as cofactor.

It catalyses the reaction restrictinol + glycine + H(+) = restricticin + H2O. It functions in the pathway antifungal biosynthesis. Functionally, nonribosomal peptide synthetase; part of the gene cluster that mediates the biosynthesis of the tetrahydropyranyl antifungal agent restricticin that acts as an inhibitor of CYP51 and blocks the ergosterol biosynthesis. Within the pathway, resC catalyzes the C3 esterification of restrictinol with glycine to yield restricticin. ResC represents an example of the emerging class of single-module NRPS-like enzymes that perform esterification reactions. The highly reducing polyketide synthase resH, the short chain dehydrogenase resG, the cyclase resF, the FAD-dependent monooxygenase resA and the enoylreductase resD are required to generate the first stable intermediate desmethylrestrictinol. ResH with resD biosynthesize the first polyketide chain intermediate that is reduced by resG, followed by epoxidation by resA before 6-endo cyclization via epoxide opening by resF leads to desmethylrestrictinol. The methyltransferase resE then catalyzes the C4 O-methylation of desmethylrestrictinol to produce restrictinol, and the nonribosomal peptide synthetase resC catalyzes the C3 esterification of restrictinol with glycine that leads to restricticin. This Aspergillus sclerotiorum protein is Nonribosomal peptide synthetase resC.